The primary structure comprises 413 residues: Gamma-glutamyl phosphate reductase (413 aa).

Belongs to the gamma-glutamyl phosphate reductase family.

It is found in the cytoplasm. The enzyme catalyses L-glutamate 5-semialdehyde + phosphate + NADP(+) = L-glutamyl 5-phosphate + NADPH + H(+). It participates in amino-acid biosynthesis; L-proline biosynthesis; L-glutamate 5-semialdehyde from L-glutamate: step 2/2. Functionally, catalyzes the NADPH-dependent reduction of L-glutamate 5-phosphate into L-glutamate 5-semialdehyde and phosphate. The product spontaneously undergoes cyclization to form 1-pyrroline-5-carboxylate. This Anoxybacillus flavithermus (strain DSM 21510 / WK1) protein is Gamma-glutamyl phosphate reductase.